A 110-amino-acid polypeptide reads, in one-letter code: MHLSSVQFAWAALVALAVSAAGALPSSAPHHVERRSFFTLECKGVFDAAIFARLDRICDDCFNLFREPQLYTLCRAECFTTPYFKGCMESLYLYDEKEQIDQMIDFVGKR.

The signal sequence occupies residues 1-23; sequence MHLSSVQFAWAALVALAVSAAGA. Positions 24 to 35 are excised as a propeptide; the sequence is LPSSAPHHVERR. Disulfide bonds link C42–C78, C58–C74, and C61–C87. V107 carries the post-translational modification Valine amide.

It belongs to the arthropod CHH/MIH/GIH/VIH hormone family.

Its subcellular location is the secreted. In Bombyx mori (Silk moth), this protein is CHH-like protein (CHHL).